The chain runs to 264 residues: Acyl-[acyl-carrier-protein]--UDP-N-acetylglucosamine O-acyltransferase (264 aa).

The protein belongs to the transferase hexapeptide repeat family. LpxA subfamily. Homotrimer.

The protein resides in the cytoplasm. The enzyme catalyses a (3R)-hydroxyacyl-[ACP] + UDP-N-acetyl-alpha-D-glucosamine = a UDP-3-O-[(3R)-3-hydroxyacyl]-N-acetyl-alpha-D-glucosamine + holo-[ACP]. It participates in glycolipid biosynthesis; lipid IV(A) biosynthesis; lipid IV(A) from (3R)-3-hydroxytetradecanoyl-[acyl-carrier-protein] and UDP-N-acetyl-alpha-D-glucosamine: step 1/6. Functionally, involved in the biosynthesis of lipid A, a phosphorylated glycolipid that anchors the lipopolysaccharide to the outer membrane of the cell. The chain is Acyl-[acyl-carrier-protein]--UDP-N-acetylglucosamine O-acyltransferase from Glaesserella parasuis serovar 5 (strain SH0165) (Haemophilus parasuis).